Here is a 379-residue protein sequence, read N- to C-terminus: 1-deoxy-D-xylulose 5-phosphate reductoisomerase (379 aa).

The NADPH site is built by threonine 10, glycine 11, serine 12, isoleucine 13, asparagine 39, and asparagine 121. Position 122 (lysine 122) interacts with 1-deoxy-D-xylulose 5-phosphate. Glutamate 123 contributes to the NADPH binding site. Aspartate 147 provides a ligand contact to Mn(2+). Residues serine 148, glutamate 149, serine 173, and histidine 196 each coordinate 1-deoxy-D-xylulose 5-phosphate. A Mn(2+)-binding site is contributed by glutamate 149. Residue glycine 202 coordinates NADPH. The 1-deoxy-D-xylulose 5-phosphate site is built by serine 209, asparagine 214, lysine 215, and glutamate 218. Glutamate 218 provides a ligand contact to Mn(2+).

It belongs to the DXR family. Mg(2+) serves as cofactor. The cofactor is Mn(2+).

It catalyses the reaction 2-C-methyl-D-erythritol 4-phosphate + NADP(+) = 1-deoxy-D-xylulose 5-phosphate + NADPH + H(+). Its pathway is isoprenoid biosynthesis; isopentenyl diphosphate biosynthesis via DXP pathway; isopentenyl diphosphate from 1-deoxy-D-xylulose 5-phosphate: step 1/6. In terms of biological role, catalyzes the NADPH-dependent rearrangement and reduction of 1-deoxy-D-xylulose-5-phosphate (DXP) to 2-C-methyl-D-erythritol 4-phosphate (MEP). The sequence is that of 1-deoxy-D-xylulose 5-phosphate reductoisomerase from Chlamydia pneumoniae (Chlamydophila pneumoniae).